A 201-amino-acid polypeptide reads, in one-letter code: Glycerol-3-phosphate acyltransferase (201 aa).

6 helical membrane passes run 3–23 (TVLF…VVVS), 51–71 (KAAI…VWLV), 85–105 (VALV…FRFV), 116–136 (VLLA…LVIA), 137–157 (YAFR…PFYY), and 158–178 (GLLF…ILLV).

It belongs to the PlsY family. In terms of assembly, probably interacts with PlsX.

The protein localises to the cell inner membrane. It catalyses the reaction an acyl phosphate + sn-glycerol 3-phosphate = a 1-acyl-sn-glycero-3-phosphate + phosphate. It functions in the pathway lipid metabolism; phospholipid metabolism. Functionally, catalyzes the transfer of an acyl group from acyl-phosphate (acyl-PO(4)) to glycerol-3-phosphate (G3P) to form lysophosphatidic acid (LPA). This enzyme utilizes acyl-phosphate as fatty acyl donor, but not acyl-CoA or acyl-ACP. The polypeptide is Glycerol-3-phosphate acyltransferase (Janthinobacterium sp. (strain Marseille) (Minibacterium massiliensis)).